Here is a 664-residue protein sequence, read N- to C-terminus: Armadillo repeat protein involved in nucleocytoplasmic transport Syo2 (664 aa).

One copy of the ARM repeat lies at Gly77–Lys119.

It belongs to the nuclear import and ribosome assembly adapter family. As to quaternary structure, forms a heterotrimeric complex with rpl5 and rpl11a or rpl11b; interaction of this complex with kap104 allows the nuclear import of the heterotrimer. Component of a hexameric 5S RNP precursor complex; this complex acts as a precursor for ribosome assembly.

It is found in the cytoplasm. Its subcellular location is the nucleus. Its function is as follows. Nuclear import adapter that specifically recruits the two functionally and topologically linked ribosomal proteins rpl5 and rpl11 (encoded by rpl11a and rpl11b). Guarantees that this cargo pair remains bound together from the time of synthesis in the cytoplasm until delivery to the nascent 5S rRNA in the nucleus. This Schizosaccharomyces pombe (strain 972 / ATCC 24843) (Fission yeast) protein is Armadillo repeat protein involved in nucleocytoplasmic transport Syo2.